The primary structure comprises 249 residues: Ribonuclease 3 (249 aa).

The 123-residue stretch at 29-151 folds into the RNase III domain; it reads SSDIEVIKKN…LIGALYECLR (123 aa). Residue Glu-65 coordinates Mg(2+). Residue Asp-69 is part of the active site. Positions 137 and 140 each coordinate Mg(2+). The active site involves Glu-140. A DRBM domain is found at 179-249; it reads NEKSALQEWS…AKEALKKLTN (71 aa). Residues 227–249 form a disordered region; the sequence is GWGSSRKKAQKEAAKEALKKLTN. Over residues 236-249 the composition is skewed to basic and acidic residues; the sequence is QKEAAKEALKKLTN.

This sequence belongs to the ribonuclease III family. As to quaternary structure, homodimer. The cofactor is Mg(2+).

The protein localises to the cytoplasm. It carries out the reaction Endonucleolytic cleavage to 5'-phosphomonoester.. In terms of biological role, digests double-stranded RNA. Involved in the processing of primary rRNA transcript to yield the immediate precursors to the large and small rRNAs (23S and 16S). Processes some mRNAs, and tRNAs when they are encoded in the rRNA operon. Processes pre-crRNA and tracrRNA of type II CRISPR loci if present in the organism. The chain is Ribonuclease 3 from Prochlorococcus marinus (strain SARG / CCMP1375 / SS120).